We begin with the raw amino-acid sequence, 146 residues long: Ribonuclease H (146 aa).

The RNase H type-1 domain maps to 1–143; that stretch reads MQKKVTIYTD…CDYLATQAIK (143 aa). Positions 10, 48, 70, and 135 each coordinate Mg(2+).

Belongs to the RNase H family. In terms of assembly, monomer. The cofactor is Mg(2+).

The protein localises to the cytoplasm. It carries out the reaction Endonucleolytic cleavage to 5'-phosphomonoester.. Endonuclease that specifically degrades the RNA of RNA-DNA hybrids. The protein is Ribonuclease H of Chlorobium phaeobacteroides (strain BS1).